A 115-amino-acid polypeptide reads, in one-letter code: Histidine decarboxylase proenzyme (115 aa).

S83 carries the pyruvic acid (Ser) modification.

In terms of assembly, the proenzyme is a hexamer of identical pi chains; each pi chain monomer is cleaved to form a small (or beta) chain and a large (or alpha) chain by non-hydrolytic self-catalysis. Pyruvate is required as a cofactor.

The enzyme catalyses L-histidine + H(+) = histamine + CO2. The protein is Histidine decarboxylase proenzyme of Lentilactobacillus buchneri (Lactobacillus buchneri).